Reading from the N-terminus, the 200-residue chain is Large ribosomal subunit protein uL4 (200 aa).

A disordered region spans residues 38-75 (GRQGSKQQKNRSDVSGGGKRPWRQKGTGRARAGTSRGP).

It belongs to the universal ribosomal protein uL4 family. As to quaternary structure, part of the 50S ribosomal subunit.

In terms of biological role, one of the primary rRNA binding proteins, this protein initially binds near the 5'-end of the 23S rRNA. It is important during the early stages of 50S assembly. It makes multiple contacts with different domains of the 23S rRNA in the assembled 50S subunit and ribosome. Forms part of the polypeptide exit tunnel. The protein is Large ribosomal subunit protein uL4 of Azotobacter vinelandii (strain DJ / ATCC BAA-1303).